Consider the following 175-residue polypeptide: Adenine phosphoribosyltransferase (175 aa).

The protein belongs to the purine/pyrimidine phosphoribosyltransferase family. Homodimer.

The protein localises to the cytoplasm. The enzyme catalyses AMP + diphosphate = 5-phospho-alpha-D-ribose 1-diphosphate + adenine. The protein operates within purine metabolism; AMP biosynthesis via salvage pathway; AMP from adenine: step 1/1. Catalyzes a salvage reaction resulting in the formation of AMP, that is energically less costly than de novo synthesis. The chain is Adenine phosphoribosyltransferase from Caldicellulosiruptor bescii (strain ATCC BAA-1888 / DSM 6725 / KCTC 15123 / Z-1320) (Anaerocellum thermophilum).